Reading from the N-terminus, the 281-residue chain is Ras-related protein Rab-40C (281 aa).

Ser23, Gly26, Lys27, and Ser46 together coordinate GTP. The segment at 41 to 49 (SPYAYSNGI) is switch-I. 2 residues coordinate Mg(2+): Ser46 and Asp69. GTP contacts are provided by Gly72, Asn126, and Arg127. The segment at 72–88 (GQGRFCTIFRSYSRGAQ) is switch-II. Residues 175 to 228 (LMRHGMEKIWRPNRVFSLQDLCCRAIVSCTPVHLIDKLPLPVTIKSHLKSFSMA) form the SOCS box domain. Residues 245-281 (SGAGGGGSKGNSLKRSKSIRPPQSPPQNCSRSNCKIS) are disordered. Over residues 270 to 281 (PQNCSRSNCKIS) the composition is skewed to polar residues. Cys273 is lipidated: S-palmitoyl cysteine. A lipid anchor (S-geranylgeranyl cysteine) is attached at Cys278.

It belongs to the small GTPase superfamily. Rab family. In terms of assembly, component of the cullin-5-RING E3 ubiquitin-protein ligase complex (ECS(RAB40C) complex) composed of CUL5, Elongin BC (ELOB and ELOC), RNF7/RBX2 and RAB40C. Interacts with protein phosphatase 6 (PP6) complex components ANKRD28, ANKRD52, PPP6C, PP6R1 and PP6R2; the interaction leads to ANKRD28 ubiquitination and decreased PP6 activity. Interacts with DAB2IP; DAB2IP acts as a GAP for RAB40C. Mg(2+) serves as cofactor.

The protein resides in the cell membrane. It is found in the cytoplasm. The protein localises to the cytosol. Its subcellular location is the golgi apparatus membrane. The catalysed reaction is GTP + H2O = GDP + phosphate + H(+). It functions in the pathway protein modification; protein ubiquitination. Regulated by guanine nucleotide exchange factors (GEFs) which promote the exchange of bound GDP for free GTP. Regulated by GTPase activating proteins (GAPs) including DAB2IP, which increase the GTP hydrolysis activity. Inhibited by GDP dissociation inhibitors (GDIs). Functionally, RAB40C small GTPase acts as substrate-recognition component of the ECS(RAB40C) E3 ubiquitin ligase complex which mediates the ubiquitination and subsequent proteasomal degradation of target proteins. The Rab40 subfamily belongs to the Rab family that are key regulators of intracellular membrane trafficking, from the formation of transport vesicles to their fusion with membranes. Rabs cycle between an inactive GDP-bound form and an active GTP-bound form that is able to recruit to membranes different sets of downstream effectors directly responsible for vesicle formation, movement, tethering and fusion. As part of the ECS(RAB40C) complex, mediates ANKRD28 ubiquitination and degradation, thereby inhibiting protein phosphatase 6 (PP6) complex activity and focal adhesion assembly during cell migration. Also negatively regulate lipid droplets accumulation in a GTP-dependent manner. The chain is Ras-related protein Rab-40C from Homo sapiens (Human).